The sequence spans 634 residues: Mediator of RNA polymerase II transcription subunit 17 (634 aa).

2 disordered regions span residues 51-73 (DKHK…DVDT) and 606-626 (DEKA…GSPG). A compositionally biased stretch (polar residues) spans 611–623 (RAQSWKPDSTTPG).

Belongs to the Mediator complex subunit 17 family. As to quaternary structure, component of the Mediator complex.

The protein resides in the nucleus. Component of the Mediator complex, a coactivator involved in the regulated transcription of nearly all RNA polymerase II-dependent genes. Mediator functions as a bridge to convey information from gene-specific regulatory proteins to the basal RNA polymerase II transcription machinery. Mediator is recruited to promoters by direct interactions with regulatory proteins and serves as a scaffold for the assembly of a functional preinitiation complex with RNA polymerase II and the general transcription factors. This Aspergillus terreus (strain NIH 2624 / FGSC A1156) protein is Mediator of RNA polymerase II transcription subunit 17 (srb4).